We begin with the raw amino-acid sequence, 201 residues long: Ribonuclease MRP protein subunit RMP1 (201 aa).

The helical transmembrane segment at 86-108 threads the bilayer; it reads YWQFNGVIALGQFVTLGCTLVTL.

Component of RNase MRP complex which consists of an RNA moiety and at least 10 protein subunits including POP1, POP3, POP4, POP5, POP6, POP7, POP8, RMP1, RPP1 and SNM1, many of which are shared with the RNase P complex.

The protein localises to the membrane. It localises to the cytoplasm. It is found in the nucleus. Its function is as follows. Functions as part of ribonuclease MRP (RNase MRP), which is involved in rRNA processing in mitochondria. In Saccharomyces cerevisiae (strain ATCC 204508 / S288c) (Baker's yeast), this protein is Ribonuclease MRP protein subunit RMP1.